Here is a 612-residue protein sequence, read N- to C-terminus: Kelch-like protein 40a (612 aa).

The BTB domain occupies 34-101; sequence VDCILKIKDK…IYTSDINLTE (68 aa). Positions 136 to 238 constitute a BACK domain; that stretch reads CLAIFRLGLL…PTSYFKEKVE (103 aa). Basic residues predominate over residues 266–275; it reads RVKRSSHRKE. Positions 266–290 are disordered; that stretch reads RVKRSSHRKEGKSAEFESDDDDEDG. Acidic residues predominate over residues 281 to 290; the sequence is FESDDDDEDG. Kelch repeat units lie at residues 350–402, 403–452, 453–500, 502–547, and 549–604; these read QIFV…EAEN, SIYV…SHKG, LVYV…VHKN, IYVV…ELGG, and LYAI…GVRL.

It belongs to the KLHL40 family. Component of the BCR(KLHL40) E3 ubiquitin ligase complex. As to expression, expressed in skeletal muscle and heart. Detected, although at much lower levels, in brain, eye and fin.

The protein resides in the cytoplasm. Its subcellular location is the myofibril. The protein localises to the sarcomere. It is found in the a band. It localises to the i band. Its function is as follows. Substrate-specific adapter of a BCR (BTB-CUL3-RBX1) E3 ubiquitin ligase complex. Required for skeletal muscle development. In Danio rerio (Zebrafish), this protein is Kelch-like protein 40a (klhl40a).